A 132-amino-acid polypeptide reads, in one-letter code: Small ribosomal subunit protein uS8 (132 aa).

It belongs to the universal ribosomal protein uS8 family. As to quaternary structure, part of the 30S ribosomal subunit. Contacts proteins S5 and S12.

Its function is as follows. One of the primary rRNA binding proteins, it binds directly to 16S rRNA central domain where it helps coordinate assembly of the platform of the 30S subunit. This is Small ribosomal subunit protein uS8 from Sinorhizobium fredii (strain NBRC 101917 / NGR234).